The following is a 94-amino-acid chain: Acylphosphatase (94 aa).

In terms of domain architecture, Acylphosphatase-like spans 8–94 (TVHVIVKGKV…EKRYKHFAQL (87 aa)). Residues R23 and N41 contribute to the active site.

This sequence belongs to the acylphosphatase family.

The catalysed reaction is an acyl phosphate + H2O = a carboxylate + phosphate + H(+). The protein is Acylphosphatase (acyP) of Bordetella parapertussis (strain 12822 / ATCC BAA-587 / NCTC 13253).